The primary structure comprises 304 residues: Energy-coupling factor transporter ATP-binding protein EcfA2 (304 aa).

An ABC transporter domain is found at 11–260; sequence LKADEILAVS…QTFLEKTTIV (250 aa). 54 to 61 serves as a coordination point for ATP; it reads GDSGSGKS.

The protein belongs to the ABC transporter superfamily. Energy-coupling factor EcfA family. In terms of assembly, forms a stable energy-coupling factor (ECF) transporter complex composed of 2 membrane-embedded substrate-binding proteins (S component), 2 ATP-binding proteins (A component) and 2 transmembrane proteins (T component).

The protein resides in the cell membrane. Its function is as follows. ATP-binding (A) component of a common energy-coupling factor (ECF) ABC-transporter complex. Unlike classic ABC transporters this ECF transporter provides the energy necessary to transport a number of different substrates. The chain is Energy-coupling factor transporter ATP-binding protein EcfA2 from Mycoplasma genitalium (strain ATCC 33530 / DSM 19775 / NCTC 10195 / G37) (Mycoplasmoides genitalium).